A 49-amino-acid chain; its full sequence is MAVHKYYQLSGETIKARKPICPRCGNGVFLAEHEDRMSCGRCGYTEFKK.

The Zn(2+) site is built by Cys21, Cys24, Cys39, and Cys42. The C4-type zinc finger occupies 21–42; sequence CPRCGNGVFLAEHEDRMSCGRC.

This sequence belongs to the eukaryotic ribosomal protein eS31 family. As to quaternary structure, part of the 30S ribosomal subunit. Requires Zn(2+) as cofactor.

The polypeptide is Small ribosomal subunit protein eS31 (Methanothrix thermoacetophila (strain DSM 6194 / JCM 14653 / NBRC 101360 / PT) (Methanosaeta thermophila)).